A 486-amino-acid chain; its full sequence is Protein nucleotidyltransferase YdiU (486 aa).

ATP-binding residues include G90, G92, R93, K113, D125, G126, R176, and R183. D252 acts as the Proton acceptor in catalysis. Positions 253 and 262 each coordinate Mg(2+). D262 contributes to the ATP binding site.

This sequence belongs to the SELO family. Mg(2+) is required as a cofactor. The cofactor is Mn(2+).

It catalyses the reaction L-seryl-[protein] + ATP = 3-O-(5'-adenylyl)-L-seryl-[protein] + diphosphate. The catalysed reaction is L-threonyl-[protein] + ATP = 3-O-(5'-adenylyl)-L-threonyl-[protein] + diphosphate. The enzyme catalyses L-tyrosyl-[protein] + ATP = O-(5'-adenylyl)-L-tyrosyl-[protein] + diphosphate. It carries out the reaction L-histidyl-[protein] + UTP = N(tele)-(5'-uridylyl)-L-histidyl-[protein] + diphosphate. It catalyses the reaction L-seryl-[protein] + UTP = O-(5'-uridylyl)-L-seryl-[protein] + diphosphate. The catalysed reaction is L-tyrosyl-[protein] + UTP = O-(5'-uridylyl)-L-tyrosyl-[protein] + diphosphate. Its function is as follows. Nucleotidyltransferase involved in the post-translational modification of proteins. It can catalyze the addition of adenosine monophosphate (AMP) or uridine monophosphate (UMP) to a protein, resulting in modifications known as AMPylation and UMPylation. The polypeptide is Protein nucleotidyltransferase YdiU (Pseudomonas entomophila (strain L48)).